A 750-amino-acid chain; its full sequence is MIIRSPEPEVKILVDRDHIKTSFEEWARPGHFSRTIAKGPETTTWIWNLHADAHDFDSHTSDLEEISRKVFSAHFGQLSIIFLWLSGMYFHGARFSNYEAWLSDPTHIGPSAQVVWPIVGQEILNGDVGGGFRGIQITSGFFQLWRASGITSELQLYCTAIGALIFAALMLFAGWFHYHKAAPKLAWFQDVESMLNHHLAGLLGLGSLSWAGHQVHVSLPINQFLNAGVDPKEIPLPHEFILNRDLLAQLYPSFAEGATPFFTLNWSKYADFLTFRGGLDPVTGGLWLTDTAHHHLAIAILFLIAGHMYRTNWGIGHGLKDILEAHKGPFTGQGHKGLYEILTTSWHAQLSLNLAMLGSLTIVVAHHMYAMPPYPYLATDYGTQLSLFTHHMWIGGFLIVGAAAHAAIFMVRDYDPTTRYNDLLDRVLRHRDAIISHLNWACIFLGFHSFGLYIHNDTMSALGRPQDMFSDTAIQLQPVFAQWIQNTHALAPGATAPGATASTSLTWGGGDLVAVGGKVALLPIPLGTADFLVHHIHAFTIHVTVLILLKGVLFARSSRLIPDKANLGFRFPCDGPGRGGTCQVSAWDHVFLGLFWMYNSISVVIFHFSWKMQSDVWGSISDQGVVTHITGGNFAQSSITINGWLRDFLWAQASQVIQSYGSSLSAYGLFFLGAHFVWAFSLMFLFSGRGYWQELIESIVWAHNKLKVAPATQPRALSIVQGRAVGVTHYLLGGIATTWAFFLARIIAVG.

Helical transmembrane passes span 70 to 93 (VFSAHFGQLSIIFLWLSGMYFHGA), 156 to 179 (LYCTAIGALIFAALMLFAGWFHYH), 195 to 219 (LNHHLAGLLGLGSLSWAGHQVHVSL), 291 to 309 (TAHHHLAIAILFLIAGHMY), 346 to 369 (WHAQLSLNLAMLGSLTIVVAHHMY), 385 to 411 (LSLFTHHMWIGGFLIVGAAAHAAIFMV), 433 to 455 (AIISHLNWACIFLGFHSFGLYIH), and 531 to 549 (FLVHHIHAFTIHVTVLILL). The [4Fe-4S] cluster site is built by Cys573 and Cys582. A run of 2 helical transmembrane segments spans residues 589–610 (HVFLGLFWMYNSISVVIFHFSW) and 664–686 (LSAYGLFFLGAHFVWAFSLMFLF). Residue His675 participates in chlorophyll a' binding. Chlorophyll a contacts are provided by Met683 and Tyr691. Residue Trp692 participates in phylloquinone binding. A helical membrane pass occupies residues 724 to 744 (AVGVTHYLLGGIATTWAFFLA).

It belongs to the PsaA/PsaB family. The PsaA/B heterodimer binds the P700 chlorophyll special pair and subsequent electron acceptors. PSI consists of a core antenna complex that captures photons, and an electron transfer chain that converts photonic excitation into a charge separation. The eukaryotic PSI reaction center is composed of at least 11 subunits. The cofactor is P700 is a chlorophyll a/chlorophyll a' dimer, A0 is one or more chlorophyll a, A1 is one or both phylloquinones and FX is a shared 4Fe-4S iron-sulfur center..

It localises to the plastid. The protein localises to the chloroplast thylakoid membrane. It carries out the reaction reduced [plastocyanin] + hnu + oxidized [2Fe-2S]-[ferredoxin] = oxidized [plastocyanin] + reduced [2Fe-2S]-[ferredoxin]. Functionally, psaA and PsaB bind P700, the primary electron donor of photosystem I (PSI), as well as the electron acceptors A0, A1 and FX. PSI is a plastocyanin-ferredoxin oxidoreductase, converting photonic excitation into a charge separation, which transfers an electron from the donor P700 chlorophyll pair to the spectroscopically characterized acceptors A0, A1, FX, FA and FB in turn. Oxidized P700 is reduced on the lumenal side of the thylakoid membrane by plastocyanin. In Helianthus annuus (Common sunflower), this protein is Photosystem I P700 chlorophyll a apoprotein A1.